Consider the following 350-residue polypeptide: Mitogen-activated protein kinase HOG1 (350 aa).

Residues 20 to 299 (YTDLQPVGMG…AAQALAHEYL (280 aa)) enclose the Protein kinase domain. ATP is bound by residues 26-34 (VGMGAFGLV) and Lys49. Asp141 functions as the Proton acceptor in the catalytic mechanism. Positions 171-173 (TGY) match the TXY motif.

It belongs to the protein kinase superfamily. Ser/Thr protein kinase family. MAP kinase subfamily. HOG1 sub-subfamily. Mg(2+) serves as cofactor.

It is found in the cytoplasm. It localises to the nucleus. It catalyses the reaction L-seryl-[protein] + ATP = O-phospho-L-seryl-[protein] + ADP + H(+). The enzyme catalyses L-threonyl-[protein] + ATP = O-phospho-L-threonyl-[protein] + ADP + H(+). In terms of biological role, proline-directed serine/threonine-protein kinase involved in a signal transduction pathway that is activated by changes in the osmolarity of the extracellular environment. Controls osmotic regulation of transcription of target genes. Involved in environmental stress response. Via the downstream MSN2 transcription factor, may play roles in the regulation of growth, conidiation, trap development, fatty acid metabolism and secondary metabolites biosynthesis. This Arthrobotrys oligospora (strain ATCC 24927 / CBS 115.81 / DSM 1491) (Nematode-trapping fungus) protein is Mitogen-activated protein kinase HOG1.